Consider the following 102-residue polypeptide: Small ribosomal subunit protein uS10 (102 aa).

Belongs to the universal ribosomal protein uS10 family. As to quaternary structure, part of the 30S ribosomal subunit.

Involved in the binding of tRNA to the ribosomes. This is Small ribosomal subunit protein uS10 from Rhodopseudomonas palustris (strain BisB18).